Consider the following 173-residue polypeptide: Oleosin 18.5 kDa (173 aa).

A polar region spans residues 1–45 (MADTARGTHHDIIGRDQYPMMGRDRDQYQMSGRGSDYSKSRQIAK). The interval 46–117 (AATAVTAGGS…AAITVFSWIY (72 aa)) is hydrophobic. Transmembrane regions (helical) follow at residues 54-74 (GSLL…LTVA), 76-96 (PLLV…ALLI), and 97-117 (TGFL…SWIY). Residues 151 to 173 (YYGQQHTGGEHDRDRTRGGQHTT) form a disordered region. The span at 158 to 167 (GGEHDRDRTR) shows a compositional bias: basic and acidic residues.

Belongs to the oleosin family.

It localises to the lipid droplet. The protein localises to the membrane. Functionally, may have a structural role to stabilize the lipid body during desiccation of the seed by preventing coalescence of the oil. Probably interacts with both lipid and phospholipid moieties of lipid bodies. May also provide recognition signals for specific lipase anchorage in lipolysis during seedling growth. The protein is Oleosin 18.5 kDa of Arabidopsis thaliana (Mouse-ear cress).